The primary structure comprises 315 residues: Olfactory receptor 8J3 (315 aa).

Residues 1-25 (MAPENFTRVTEFILTGVSSCPELQI) are Extracellular-facing. N-linked (GlcNAc...) asparagine glycosylation occurs at Asn5. The chain crosses the membrane as a helical span at residues 26-46 (PLFLVFLVLYVLTMAGNLGII). The Cytoplasmic portion of the chain corresponds to 47 to 54 (TLTSVDSR). The chain crosses the membrane as a helical span at residues 55–75 (LQNPMYFFLRHLAIINLGNST). The Extracellular segment spans residues 76–99 (VIAPKMLMNFLVKKKTTSFYECAT). A disulfide bridge links Cys97 with Cys189. Residues 100-120 (QLGGFLFFIVSEVMMLAVMAY) form a helical membrane-spanning segment. Residues 121–139 (DRYVAICNPLLYMVVVSRR) lie on the Cytoplasmic side of the membrane. Residues 140–160 (LCLLLVSLTYLYGFSTAIVVS) form a helical membrane-spanning segment. Topologically, residues 161-197 (PCIFSVSYCSSNIINHFYCDIAPLLALSCSDTYIPET) are extracellular. The chain crosses the membrane as a helical span at residues 198-217 (IVFISAATNLVFSMITVLVS). Topologically, residues 218–237 (YFNIVLSILRIRSPEGRKKA) are cytoplasmic. Residues 238–258 (FSTCASHMIAVTVFYGTMLFM) form a helical membrane-spanning segment. Residues 259–271 (YLQPQTNHSLDTD) are Extracellular-facing. The N-linked (GlcNAc...) asparagine glycan is linked to Asn265. A helical membrane pass occupies residues 272 to 292 (KMASVFYTLVIPMLNPLIYSL). At 293–315 (RNNDVNVALKKFMENPCYSFKSM) the chain is on the cytoplasmic side.

Belongs to the G-protein coupled receptor 1 family.

It localises to the cell membrane. Functionally, odorant receptor. This chain is Olfactory receptor 8J3 (OR8J3), found in Homo sapiens (Human).